We begin with the raw amino-acid sequence, 142 residues long: Salivary protein 15b (142 aa).

The first 20 residues, 1–20 (MKYLGLALISAVFLIGTCQA), serve as a signal peptide directing secretion. Disulfide bonds link Cys27-Cys44, Cys40-Cys108, and Cys91-Cys117.

The protein belongs to the PBP/GOBP family. Female salivary gland.

Its subcellular location is the secreted. Inhibits contact coagulation pathway activation in the host by sequestering anionic polymers, such as dextran sulfate and heparin, and thus blocking interaction of protein components of the pathway with negatively charged surfaces. Inhibits dextran sulfate-mediated autoactivation of host coagulation factor XII (F12). Inhibits dextran sulfate-mediated activation of host factor XI (F11) by activated F12. Inhibits polyphosphate-induced plasma extravasation at the injection site in mouse model, probably via inhibition of bradykinin generation in host skin. The protein is Salivary protein 15b of Phlebotomus duboscqi (Sandfly).